A 154-amino-acid polypeptide reads, in one-letter code: Transcriptional repressor NrdR (154 aa).

Residues 3-34 fold into a zinc finger; it reads CPFCNHGELKVIDSRNAPESNAIKRRRECLRC. The region spanning 48 to 138 is the ATP-cone domain; that stretch reads VQVLKRDGRY…VYRRFKDVGE (91 aa).

It belongs to the NrdR family. The cofactor is Zn(2+).

Its function is as follows. Negatively regulates transcription of bacterial ribonucleotide reductase nrd genes and operons by binding to NrdR-boxes. The protein is Transcriptional repressor NrdR of Chlamydia trachomatis serovar L2 (strain ATCC VR-902B / DSM 19102 / 434/Bu).